The chain runs to 100 residues: Small ribosomal subunit protein uS14c (100 aa).

It belongs to the universal ribosomal protein uS14 family. Part of the 30S ribosomal subunit.

Its subcellular location is the plastid. It localises to the chloroplast. Functionally, binds 16S rRNA, required for the assembly of 30S particles. The sequence is that of Small ribosomal subunit protein uS14c from Draba nemorosa (Woodland whitlowgrass).